A 213-amino-acid chain; its full sequence is Pyrrolidone-carboxylate peptidase (213 aa).

Active-site residues include Glu-80, Cys-143, and His-165.

Belongs to the peptidase C15 family. As to quaternary structure, homotetramer.

It is found in the cytoplasm. It carries out the reaction Release of an N-terminal pyroglutamyl group from a polypeptide, the second amino acid generally not being Pro.. Its function is as follows. Removes 5-oxoproline from various penultimate amino acid residues except L-proline. The chain is Pyrrolidone-carboxylate peptidase from Erwinia tasmaniensis (strain DSM 17950 / CFBP 7177 / CIP 109463 / NCPPB 4357 / Et1/99).